The primary structure comprises 224 residues: Putative homeobox protein R749 (224 aa).

Residues 139-162 (KTKTIKKSTSEKKTSPKKKTTSQQ) form a disordered region. Residues 161 to 220 (QQIKRVRLSDEERNILESQYSKNNFPSPEIRDELAKKIGKTPRQVQIWFQNKRCKDRKNL) constitute a DNA-binding region (homeobox).

Its subcellular location is the host nucleus. This is Putative homeobox protein R749 from Acanthamoeba polyphaga mimivirus (APMV).